Here is a 274-residue protein sequence, read N- to C-terminus: Large ribosomal subunit protein uL2 (274 aa).

The disordered stretch occupies residues 223–264 (VAMNPVDHPHGGGEGRTSGGRHPVSPWGVPTKGYKTRSNKRT).

The protein belongs to the universal ribosomal protein uL2 family. In terms of assembly, part of the 50S ribosomal subunit. Forms a bridge to the 30S subunit in the 70S ribosome.

Functionally, one of the primary rRNA binding proteins. Required for association of the 30S and 50S subunits to form the 70S ribosome, for tRNA binding and peptide bond formation. It has been suggested to have peptidyltransferase activity; this is somewhat controversial. Makes several contacts with the 16S rRNA in the 70S ribosome. The sequence is that of Large ribosomal subunit protein uL2 from Shewanella denitrificans (strain OS217 / ATCC BAA-1090 / DSM 15013).